The sequence spans 468 residues: Neuronal acetylcholine receptor subunit alpha-5 (468 aa).

An N-terminal signal peptide occupies residues 1–22; the sequence is MAARGSGPRALRLLLLVQLVAG. Topologically, residues 23–254 are extracellular; the sequence is RCGLAGAAGG…VIKRLPLFYT (232 aa). N-linked (GlcNAc...) asparagine glycans are attached at residues Asn-155, Asn-183, and Asn-229. Cys-170 and Cys-184 form a disulfide bridge. The cysteines at positions 234 and 235 are disulfide-linked. 3 helical membrane passes run 255–275, 282–302, and 317–337; these read LFLIIPCIGLSFLTVLVFYLP, ICLCTSVLVSLTVFLLVIEEI, and LVFTMIFVTLSIMVTVFAINI. Over 338–429 the chain is Cytoplasmic; sequence HHRSSSTHNA…WKFIAQVLDR (92 aa). A helical membrane pass occupies residues 430-451; the sequence is MFLWTFLFVSIVGSLGLFVPVI. Residues 452-468 are Extracellular-facing; sequence YKWANILIPVHIGNANK.

It belongs to the ligand-gated ion channel (TC 1.A.9) family. Acetylcholine receptor (TC 1.A.9.1) subfamily. Alpha-5/CHRNA5 sub-subfamily. In terms of assembly, neuronal AChR that forms heteropentamers composed of two different type of subunits: alpha and non-alpha (beta). CHRNA5/alpha-5 subunit is only able to form functional nAChRs when co-assembled with another alpha subunit, can be combined to CHRNA4/alpha-4 or CHRNA3/alpha-3 and CHRNB4/beta-4 or CHRNB2/beta-2 to give rise to functional receptors. Interacts with LYPD6.

The protein localises to the synaptic cell membrane. Its subcellular location is the cell membrane. It carries out the reaction Ca(2+)(in) = Ca(2+)(out). The enzyme catalyses K(+)(in) = K(+)(out). The catalysed reaction is Na(+)(in) = Na(+)(out). With respect to regulation, activated by a myriad of ligands such as acetylcholine, cytisine, nicotine, choline and epibatidine. In terms of biological role, component of neuronal acetylcholine receptors (nAChRs) that function as pentameric, ligand-gated cation channels with high calcium permeability among other activities. nAChRs are excitatory neurotrasnmitter receptors formed by a collection of nAChR subunits known to mediate synaptic transmission in the nervous system and the neuromuscular junction. Each nAchR subunit confers differential attributes to channel properties, including activation, deactivation and desensitization kinetics, pH sensitivity, cation permeability, and binding to allosteric modulators. Has an accessory rather than functional role and is only able to form functional nAChRs when co-assembled with another beta subunit. Participates in pentameric assemblies along with CHRNA3, CHRNA4, CHRNB2 and CHRNB4. Increases receptor sensitivity to acetylcholine and nicotine when associated with CHRNA4 and CHRNB2. Plays a role in nicotine addiction. The sequence is that of Neuronal acetylcholine receptor subunit alpha-5 from Homo sapiens (Human).